We begin with the raw amino-acid sequence, 294 residues long: tRNA pseudouridine synthase B (294 aa).

The active-site Nucleophile is Asp-39.

The protein belongs to the pseudouridine synthase TruB family. Type 1 subfamily.

The catalysed reaction is uridine(55) in tRNA = pseudouridine(55) in tRNA. Functionally, responsible for synthesis of pseudouridine from uracil-55 in the psi GC loop of transfer RNAs. The polypeptide is tRNA pseudouridine synthase B (Streptococcus pyogenes serotype M3 (strain ATCC BAA-595 / MGAS315)).